Here is a 558-residue protein sequence, read N- to C-terminus: Arginine--tRNA ligase (558 aa).

The short motif at 116-126 (ANPNGPLHVGH) is the 'HIGH' region element.

It belongs to the class-I aminoacyl-tRNA synthetase family.

Its subcellular location is the cytoplasm. It catalyses the reaction tRNA(Arg) + L-arginine + ATP = L-arginyl-tRNA(Arg) + AMP + diphosphate. In Methanocorpusculum labreanum (strain ATCC 43576 / DSM 4855 / Z), this protein is Arginine--tRNA ligase.